We begin with the raw amino-acid sequence, 430 residues long: Adenylosuccinate synthetase (430 aa).

Residues 12-18 (GDEGKGK) and 40-42 (GHT) each bind GTP. D13 acts as the Proton acceptor in catalysis. 2 residues coordinate Mg(2+): D13 and G40. IMP-binding positions include 13–16 (DEGK), 38–41 (NAGH), T130, R144, Q224, T239, and R303. Catalysis depends on H41, which acts as the Proton donor. 299 to 305 (VNTGRKR) contributes to the substrate binding site. GTP-binding positions include R305, 331-333 (KLD), and 413-415 (STS).

Belongs to the adenylosuccinate synthetase family. As to quaternary structure, homodimer. It depends on Mg(2+) as a cofactor.

The protein resides in the cytoplasm. It carries out the reaction IMP + L-aspartate + GTP = N(6)-(1,2-dicarboxyethyl)-AMP + GDP + phosphate + 2 H(+). Its pathway is purine metabolism; AMP biosynthesis via de novo pathway; AMP from IMP: step 1/2. In terms of biological role, plays an important role in the de novo pathway of purine nucleotide biosynthesis. Catalyzes the first committed step in the biosynthesis of AMP from IMP. The polypeptide is Adenylosuccinate synthetase (Rhodopseudomonas palustris (strain TIE-1)).